A 426-amino-acid chain; its full sequence is Probable glucose-6-phosphate isomerase (426 aa).

Glu-272 (proton donor) is an active-site residue. Catalysis depends on residues His-293 and Lys-404.

This sequence belongs to the GPI family.

Its subcellular location is the cytoplasm. The enzyme catalyses alpha-D-glucose 6-phosphate = beta-D-fructose 6-phosphate. It participates in carbohydrate biosynthesis; gluconeogenesis. Its pathway is carbohydrate degradation; glycolysis; D-glyceraldehyde 3-phosphate and glycerone phosphate from D-glucose: step 2/4. In terms of biological role, catalyzes the reversible isomerization of glucose-6-phosphate to fructose-6-phosphate. The protein is Probable glucose-6-phosphate isomerase of Halobacterium salinarum (strain ATCC 700922 / JCM 11081 / NRC-1) (Halobacterium halobium).